Reading from the N-terminus, the 136-residue chain is Large ribosomal subunit protein uL16 (136 aa).

The protein belongs to the universal ribosomal protein uL16 family. Part of the 50S ribosomal subunit.

In terms of biological role, binds 23S rRNA and is also seen to make contacts with the A and possibly P site tRNAs. The chain is Large ribosomal subunit protein uL16 from Enterobacter sp. (strain 638).